We begin with the raw amino-acid sequence, 242 residues long: Spiralin (242 aa).

The N-terminal stretch at 1 to 23 is a signal peptide; sequence MKKLLSILAVFGVSAVGTTSVVA. Residue Cys24 is the site of N-palmitoyl cysteine attachment. A lipid anchor (S-diacylglycerol cysteine) is attached at Cys24.

Belongs to the spiralin family. In terms of assembly, seems to occur as dimer, tetramers, and large oligomers of identical chains. Post-translationally, palmitate and stearate are the major lipid components.

The protein localises to the cell membrane. In terms of biological role, major membrane protein of spiroplasma. This chain is Spiralin (spi), found in Spiroplasma melliferum.